The sequence spans 515 residues: RNA-binding region-containing protein 3 (515 aa).

The segment at Met-1–Asp-26 is disordered. Ser-21 bears the Phosphoserine mark. Residues Arg-27–Glu-102 enclose the RRM 1 domain. 3 disordered regions span residues His-107–Glu-133, Leu-215–Arg-254, and Glu-337–Asn-369. Ser-108 carries the post-translational modification Phosphoserine. The segment covering Ala-115–Glu-133 has biased composition (basic and acidic residues). A compositionally biased stretch (pro residues) spans Pro-218–Pro-230. The segment covering Glu-337–Asp-348 has biased composition (basic and acidic residues). Residue Ser-349 is modified to Phosphoserine. The 84-residue stretch at Cys-419–Ser-502 folds into the RRM 2 domain.

In terms of assembly, component of the U11/U12 snRNPs that are part of the U12-type spliceosome. Found in a complex with m(7)G-capped U12 snRNA. Interacts with PDCD7.

It localises to the nucleus. Its function is as follows. Participates in pre-mRNA U12-dependent splicing, performed by the minor spliceosome which removes U12-type introns. U12-type introns comprises less than 1% of all non-coding sequences. Binds to the 3'-stem-loop of m(7)G-capped U12 snRNA. The protein is RNA-binding region-containing protein 3 (Rnpc3) of Rattus norvegicus (Rat).